The primary structure comprises 108 residues: UPF0145 protein HDEF_1024 (108 aa).

It belongs to the UPF0145 family.

This chain is UPF0145 protein HDEF_1024, found in Hamiltonella defensa subsp. Acyrthosiphon pisum (strain 5AT).